Consider the following 402-residue polypeptide: Dual-specificity RNA methyltransferase RlmN (402 aa).

Glu124 serves as the catalytic Proton acceptor. Residues 130–370 (DADRGTLCVS…APVRTPRGRD (241 aa)) form the Radical SAM core domain. Cysteines 137 and 375 form a disulfide. 3 residues coordinate [4Fe-4S] cluster: Cys144, Cys148, and Cys151. S-adenosyl-L-methionine contacts are provided by residues 199 to 200 (GE), Ser231, 253 to 255 (SLH), and Asn332. Cys375 serves as the catalytic S-methylcysteine intermediate.

This sequence belongs to the radical SAM superfamily. RlmN family. [4Fe-4S] cluster is required as a cofactor.

The protein resides in the cytoplasm. It catalyses the reaction adenosine(2503) in 23S rRNA + 2 reduced [2Fe-2S]-[ferredoxin] + 2 S-adenosyl-L-methionine = 2-methyladenosine(2503) in 23S rRNA + 5'-deoxyadenosine + L-methionine + 2 oxidized [2Fe-2S]-[ferredoxin] + S-adenosyl-L-homocysteine. The catalysed reaction is adenosine(37) in tRNA + 2 reduced [2Fe-2S]-[ferredoxin] + 2 S-adenosyl-L-methionine = 2-methyladenosine(37) in tRNA + 5'-deoxyadenosine + L-methionine + 2 oxidized [2Fe-2S]-[ferredoxin] + S-adenosyl-L-homocysteine. Specifically methylates position 2 of adenine 2503 in 23S rRNA and position 2 of adenine 37 in tRNAs. m2A2503 modification seems to play a crucial role in the proofreading step occurring at the peptidyl transferase center and thus would serve to optimize ribosomal fidelity. The polypeptide is Dual-specificity RNA methyltransferase RlmN (Rhizorhabdus wittichii (strain DSM 6014 / CCUG 31198 / JCM 15750 / NBRC 105917 / EY 4224 / RW1) (Sphingomonas wittichii)).